The primary structure comprises 805 residues: Replication restart protein PriA (805 aa).

Residues 1–110 form a 3'BD region; sequence MNFAEVIVDV…QAMLPAALKA (110 aa). The tract at residues 111-166 is linker; it reads KYEKELKIAHGADLPPQVERLFSETKTLLYSDIPDHETLKLIQRHVQKGDIDVTYK. The segment at 167 to 253 is WH; the sequence is VAQKTNKKMV…KESYEEVYRD (87 aa). The 167-residue stretch at 282–448 folds into the Helicase ATP-binding domain; that stretch reads TLDSDEHKVF…QKGVYELLSL (167 aa). Position 295-302 (295-302) interacts with ATP; it reads GVTGSGKT. Residues 391–394 carry the DEAH box motif; the sequence is DEEH. C510, C513, C519, C522, C537, C540, C550, and C553 together coordinate Zn(2+). A Helicase C-terminal domain is found at 545 to 699; the sequence is PVPHTCPECA…TFYQHEMAHR (155 aa).

Belongs to the helicase family. PriA subfamily. In terms of assembly, monomer. Component of the replication restart primosome which assembles in this order; PriA, DnaD then DnaB. The preferred DNA substrate mimics an arrested DNA replication fork with unreplicated lagging strand. Interacts with DnaD but not DnaB. Interacts with SSB (sbbA) via the latter's 35 residue C-terminal tail which tethers PriA to ssDNA. Colocalizes with DNA pol III subunit gamma/tau (dnaX). May interact with RarA. Zn(2+) serves as cofactor.

It is found in the cytoplasm. The protein resides in the nucleoid. It carries out the reaction Couples ATP hydrolysis with the unwinding of duplex DNA by translocating in the 3'-5' direction.. The catalysed reaction is ATP + H2O = ADP + phosphate + H(+). Its function is as follows. Initiates the restart of stalled replication forks, which reloads the replicative helicase on sites other than the origin of replication. Recognizes and binds to abandoned replication forks and remodels them to uncover a helicase loading site. Promotes assembly of the primosome at these replication forks. Serves as the initiating protein for assembly of the replication restart primosome; binding of PriA to an arrested DNA replication fork with unreplicated lagging strand triggers assembly. Sequentially DnaD (possibly as a dimer) and DnaB homotetramers bind. Assembly probably continues by loading of the DnaC replicative helicase aided by helicase loader DnaI. A single-strand (ss)DNA-dependent ATPase with helicase activity. Recognizes and binds the arrested nascent DNA chain at stalled replication forks. Binds forked DNA substrates and makes a larger complex with RarA; RarA has no effect on the helicase function. Binds ssDNA, D-loops and replication fork-like substrates but not double-stranded (ds)DNA; the preferred DNA substrate mimics an arrested DNA replication fork with an unreplicated lagging strand. Recognizes nicked dsDNA. A supershift on ssDNA occurs in the presence of single-stranded binding protein (SSB). Cannot substitute for E.coli PriA. Functionally, required for replication of plasmids that have a rolling circle mechanism, which produces circular single-stranded (ss)DNA intermediates corresponding to the lagging strand template, which are then converted into double-stranded (ds)DNA; priA is required to activate the conversion of ssDNA into dsDNA. The polypeptide is Replication restart protein PriA (Bacillus subtilis (strain 168)).